Reading from the N-terminus, the 105-residue chain is Urease subunit beta (105 aa).

The protein belongs to the urease beta subunit family. Heterotrimer of UreA (gamma), UreB (beta) and UreC (alpha) subunits. Three heterotrimers associate to form the active enzyme.

It localises to the cytoplasm. It carries out the reaction urea + 2 H2O + H(+) = hydrogencarbonate + 2 NH4(+). Its pathway is nitrogen metabolism; urea degradation; CO(2) and NH(3) from urea (urease route): step 1/1. The chain is Urease subunit beta from Prochlorococcus marinus (strain MIT 9313).